The chain runs to 289 residues: Acetyl-coenzyme A carboxylase carboxyl transferase subunit beta (289 aa).

The 256-residue stretch at 34-289 folds into the CoA carboxyltransferase N-terminal domain; sequence MWVKCNKCGE…KLINMHQNSF (256 aa). Residues Cys38, Cys41, Cys57, and Cys60 each coordinate Zn(2+). Residues 38-60 form a C4-type zinc finger; it reads CNKCGEILYQNDLEKNYMVCNLC.

The protein belongs to the AccD/PCCB family. Acetyl-CoA carboxylase is a heterohexamer composed of biotin carboxyl carrier protein (AccB), biotin carboxylase (AccC) and two subunits each of ACCase subunit alpha (AccA) and ACCase subunit beta (AccD). The cofactor is Zn(2+).

It is found in the cytoplasm. It carries out the reaction N(6)-carboxybiotinyl-L-lysyl-[protein] + acetyl-CoA = N(6)-biotinyl-L-lysyl-[protein] + malonyl-CoA. It participates in lipid metabolism; malonyl-CoA biosynthesis; malonyl-CoA from acetyl-CoA: step 1/1. Functionally, component of the acetyl coenzyme A carboxylase (ACC) complex. Biotin carboxylase (BC) catalyzes the carboxylation of biotin on its carrier protein (BCCP) and then the CO(2) group is transferred by the transcarboxylase to acetyl-CoA to form malonyl-CoA. The sequence is that of Acetyl-coenzyme A carboxylase carboxyl transferase subunit beta from Clostridium botulinum (strain Okra / Type B1).